A 406-amino-acid polypeptide reads, in one-letter code: Cholinephosphotransferase 1 (406 aa).

The residue at position 2 (A2) is an N-acetylalanine. At 2–62 (AAGAGARPAP…LLQWIPLWMA (61 aa)) the chain is on the cytoplasmic side. A helical transmembrane segment spans residues 63-83 (PNSITLLGLAINMLTTLVLIS). N64 contacts CDP-choline. The Lumenal portion of the chain corresponds to 84–93 (YCPTVTEEAP). A helical transmembrane segment spans residues 94–118 (YWTYLLCALGLFIYQSLDAIDGKQA). Residues D111 and D114 each coordinate Mg(2+). Residue R119 participates in CDP-choline binding. Topologically, residues 119 to 125 (RRTNSCS) are cytoplasmic. Residues 126 to 150 (PLGELFDHGCDSLSTVFMAVGASIA) form a helical membrane-spanning segment. D132 is a Mg(2+) binding site. H133 (proton acceptor) is an active-site residue. D136 lines the Mg(2+) pocket. Topologically, residues 151–160 (VRLGTHPDWL) are lumenal. The chain crosses the membrane as a helical span at residues 161–179 (FFCSFIGMFMFYCAHWQTY). Residues 180–190 (VSGVLRFGKVD) are Cytoplasmic-facing. Residues 191–207 (VTEIQIALVIVFVLSTF) traverse the membrane as a helical segment. Over 208–222 (GGATMWDYTIPILEI) the chain is Lumenal. A helical membrane pass occupies residues 223-248 (KLKILPVLGVVGGAIFSCSNYFHVIL). The Cytoplasmic portion of the chain corresponds to 249 to 265 (HGGVGKNGSTIAGTSVL). Residues 266–281 (SPGLHIGIIIILAIMI) form a helical membrane-spanning segment. Residues 282–293 (YKKSATNLFEKH) are Lumenal-facing. A helical membrane pass occupies residues 294-316 (PCLYTLMFGCVFAKVSQKLVIAH). Residues 317-329 (MTKSELYLQDTVF) lie on the Cytoplasmic side of the membrane. The chain crosses the membrane as a helical span at residues 330-339 (IGPGLLFLDQ). Residues 340 to 346 (YFNNFVD) lie on the Lumenal side of the membrane. A helical transmembrane segment spans residues 347 to 376 (EYIVLWIAMVISSLDMMRYFSALCLQISRH). Over 377-406 (LHLSIFKTSCHQAPEQVQVLPPKSHQNNMD) the chain is Cytoplasmic.

It belongs to the CDP-alcohol phosphatidyltransferase class-I family. Mg(2+) serves as cofactor. Requires Mn(2+) as cofactor.

It localises to the golgi apparatus membrane. It catalyses the reaction CDP-choline + a 1,2-diacyl-sn-glycerol = a 1,2-diacyl-sn-glycero-3-phosphocholine + CMP + H(+). It carries out the reaction 1-octadecanoyl-2-(5Z,8Z,11Z,14Z-eicosatetraenoyl)-sn-glycerol + CDP-choline = 1-octadecanoyl-2-(5Z,8Z,11Z,14Z-eicosatetraenoyl)-sn-glycero-3-phosphocholine + CMP + H(+). The catalysed reaction is 1-hexadecanoyl-2-(9Z-octadecenoyl)-sn-glycerol + CDP-choline = 1-hexadecanoyl-2-(9Z-octadecenoyl)-sn-glycero-3-phosphocholine + CMP + H(+). The enzyme catalyses 1-hexadecanoyl-2-(4Z,7Z,10Z,13Z,16Z,19Z-docosahexaenoyl)-sn-glycerol + CDP-choline = 1-hexadecanoyl-2-(4Z,7Z,10Z,13Z,16Z,19Z-docosahexaenoyl)-sn-glycero-3-phosphocholine + CMP + H(+). It catalyses the reaction 1,2-dioctanoyl-sn-glycerol + CDP-choline = 1,2-dioctanoyl-sn-glycero-3-phosphocholine + CMP + H(+). Its pathway is phospholipid metabolism; phosphatidylcholine biosynthesis; phosphatidylcholine from phosphocholine: step 2/2. Functionally, catalyzes the final step of de novo phosphatidylcholine (PC) synthesis, i.e. the transfer of choline phosphate from CDP-choline to the free hydroxyl of a diacylglycerol (DAG), producing a PC. It thereby plays a central role in the formation and maintenance of vesicular membranes. This Bos taurus (Bovine) protein is Cholinephosphotransferase 1 (CHPT1).